We begin with the raw amino-acid sequence, 349 residues long: Protein-glutamate methylesterase/protein-glutamine glutaminase (349 aa).

The 118-residue stretch at 5–122 (RVLCVDDSAL…REGMLAYSEL (118 aa)) folds into the Response regulatory domain. Aspartate 56 carries the 4-aspartylphosphate modification. Residues 152–344 (LLSSEKLIAI…QRMLAQISSG (193 aa)) form the CheB-type methylesterase domain. Residues serine 164, histidine 190, and aspartate 286 contribute to the active site.

This sequence belongs to the CheB family. Phosphorylated by CheA. Phosphorylation of the N-terminal regulatory domain activates the methylesterase activity.

It is found in the cytoplasm. It catalyses the reaction [protein]-L-glutamate 5-O-methyl ester + H2O = L-glutamyl-[protein] + methanol + H(+). The enzyme catalyses L-glutaminyl-[protein] + H2O = L-glutamyl-[protein] + NH4(+). In terms of biological role, involved in chemotaxis. Part of a chemotaxis signal transduction system that modulates chemotaxis in response to various stimuli. Catalyzes the demethylation of specific methylglutamate residues introduced into the chemoreceptors (methyl-accepting chemotaxis proteins or MCP) by CheR. Also mediates the irreversible deamidation of specific glutamine residues to glutamic acid. This Yersinia pestis bv. Antiqua (strain Antiqua) protein is Protein-glutamate methylesterase/protein-glutamine glutaminase.